The primary structure comprises 155 residues: Altered inheritance rate of mitochondria protein 29 (155 aa).

Serine 78 is subject to Phosphoserine.

The protein belongs to the UPF0538 family.

The protein localises to the cytoplasm. Functionally, may be involved in mitochondrial organization and biogenesis. In Saccharomyces cerevisiae (strain ATCC 204508 / S288c) (Baker's yeast), this protein is Altered inheritance rate of mitochondria protein 29 (AIM29).